Here is a 281-residue protein sequence, read N- to C-terminus: UPF0750 membrane protein YvjA (281 aa).

Transmembrane regions (helical) follow at residues 14-34, 56-76, 77-97, 108-128, and 149-169; these read YVYI…FLLP, AAYV…ILLG, GKFG…VFLT, LLAA…VYLG, and SLGK…MIVF.

It belongs to the UPF0750 family.

It is found in the cell membrane. The chain is UPF0750 membrane protein YvjA (yvjA) from Bacillus subtilis (strain 168).